A 332-amino-acid polypeptide reads, in one-letter code: NADH-quinone oxidoreductase subunit H (332 aa).

The next 8 membrane-spanning stretches (helical) occupy residues 11-31, 77-97, 110-130, 156-176, 182-202, 240-260, 268-288, and 307-327; these read TYKILFLLVPVLVSVAMIVWL, VIFILAPIVTMTLALVSWAVI, VGVLYLFAVSSLGVYGIIMGG, IGVIIINVLLCVGSLNLNDII, LWFIIPLFPMFVIFFISALAE, NILLMCAMGSILFLGGWLSPI, IPGAIWMIFKILFLFVLFALV, and IFLPLSLTWVVLTASYLFYFN.

This sequence belongs to the complex I subunit 1 family. NDH-1 is composed of 14 different subunits. Subunits NuoA, H, J, K, L, M, N constitute the membrane sector of the complex.

Its subcellular location is the cell inner membrane. It catalyses the reaction a quinone + NADH + 5 H(+)(in) = a quinol + NAD(+) + 4 H(+)(out). Its function is as follows. NDH-1 shuttles electrons from NADH, via FMN and iron-sulfur (Fe-S) centers, to quinones in the respiratory chain. The immediate electron acceptor for the enzyme in this species is believed to be ubiquinone. Couples the redox reaction to proton translocation (for every two electrons transferred, four hydrogen ions are translocated across the cytoplasmic membrane), and thus conserves the redox energy in a proton gradient. This subunit may bind ubiquinone. The polypeptide is NADH-quinone oxidoreductase subunit H (Pelagibacter ubique (strain HTCC1062)).